Consider the following 1402-residue polypeptide: DNA-directed RNA polymerase subunit beta' (1402 aa).

Positions 71, 73, 86, and 89 each coordinate Zn(2+). Residues Asp-462, Asp-464, and Asp-466 each coordinate Mg(2+). Residues Cys-811, Cys-885, Cys-892, and Cys-895 each contribute to the Zn(2+) site.

The protein belongs to the RNA polymerase beta' chain family. In terms of assembly, the RNAP catalytic core consists of 2 alpha, 1 beta, 1 beta' and 1 omega subunit. When a sigma factor is associated with the core the holoenzyme is formed, which can initiate transcription. The cofactor is Mg(2+). It depends on Zn(2+) as a cofactor.

It catalyses the reaction RNA(n) + a ribonucleoside 5'-triphosphate = RNA(n+1) + diphosphate. In terms of biological role, DNA-dependent RNA polymerase catalyzes the transcription of DNA into RNA using the four ribonucleoside triphosphates as substrates. This is DNA-directed RNA polymerase subunit beta' from Rhizobium etli (strain ATCC 51251 / DSM 11541 / JCM 21823 / NBRC 15573 / CFN 42).